Consider the following 55-residue polypeptide: ATP synthase protein 8 (55 aa).

A helical membrane pass occupies residues 6 to 26 (PHPWFAILVFSWIFFLVILPK).

Belongs to the ATPase protein 8 family. In terms of assembly, F-type ATPases have 2 components, CF(1) - the catalytic core - and CF(0) - the membrane proton channel.

It localises to the mitochondrion membrane. In terms of biological role, mitochondrial membrane ATP synthase (F(1)F(0) ATP synthase or Complex V) produces ATP from ADP in the presence of a proton gradient across the membrane which is generated by electron transport complexes of the respiratory chain. F-type ATPases consist of two structural domains, F(1) - containing the extramembraneous catalytic core and F(0) - containing the membrane proton channel, linked together by a central stalk and a peripheral stalk. During catalysis, ATP synthesis in the catalytic domain of F(1) is coupled via a rotary mechanism of the central stalk subunits to proton translocation. Part of the complex F(0) domain. Minor subunit located with subunit a in the membrane. The chain is ATP synthase protein 8 (MT-ATP8) from Squalus acanthias (Spiny dogfish).